The sequence spans 368 residues: Phospho-N-acetylmuramoyl-pentapeptide-transferase (368 aa).

The next 9 membrane-spanning stretches (helical) occupy residues 30–50, 72–92, 95–115, 139–159, 169–189, 208–228, 238–258, 264–286, and 345–365; these read AAAI…IKYL, LPTM…LLWS, IDPH…IGFI, VTLG…SVLL, YLTI…ITAV, AIVV…VYAV, GGEI…FLWF, EIIM…ALLI, and KIVI…LMTL.

It belongs to the glycosyltransferase 4 family. MraY subfamily. The cofactor is Mg(2+).

Its subcellular location is the cell inner membrane. The enzyme catalyses UDP-N-acetyl-alpha-D-muramoyl-L-alanyl-gamma-D-glutamyl-meso-2,6-diaminopimeloyl-D-alanyl-D-alanine + di-trans,octa-cis-undecaprenyl phosphate = di-trans,octa-cis-undecaprenyl diphospho-N-acetyl-alpha-D-muramoyl-L-alanyl-D-glutamyl-meso-2,6-diaminopimeloyl-D-alanyl-D-alanine + UMP. Its pathway is cell wall biogenesis; peptidoglycan biosynthesis. Its function is as follows. Catalyzes the initial step of the lipid cycle reactions in the biosynthesis of the cell wall peptidoglycan: transfers peptidoglycan precursor phospho-MurNAc-pentapeptide from UDP-MurNAc-pentapeptide onto the lipid carrier undecaprenyl phosphate, yielding undecaprenyl-pyrophosphoryl-MurNAc-pentapeptide, known as lipid I. The sequence is that of Phospho-N-acetylmuramoyl-pentapeptide-transferase from Pelodictyon phaeoclathratiforme (strain DSM 5477 / BU-1).